Reading from the N-terminus, the 440-residue chain is Chromosome partition protein MukF (440 aa).

Residues 208–236 (LSETSGTLRELQDTLEAAGDKLQANLLRI) are leucine-zipper.

It belongs to the MukF family. As to quaternary structure, interacts, and probably forms a ternary complex, with MukE and MukB via its C-terminal region. The complex formation is stimulated by calcium or magnesium. It is required for an interaction between MukE and MukB.

The protein localises to the cytoplasm. It localises to the nucleoid. Functionally, involved in chromosome condensation, segregation and cell cycle progression. May participate in facilitating chromosome segregation by condensation DNA from both sides of a centrally located replisome during cell division. Not required for mini-F plasmid partitioning. Probably acts via its interaction with MukB and MukE. Overexpression results in anucleate cells. It has a calcium binding activity. The sequence is that of Chromosome partition protein MukF from Shigella boydii serotype 4 (strain Sb227).